The following is a 354-amino-acid chain: Ribosomal RNA large subunit methyltransferase M (354 aa).

S-adenosyl-L-methionine is bound by residues Ser-183, 216–219 (SPGG), Asp-235, Asp-255, and Asp-271. The active-site Proton acceptor is the Lys-300.

The protein belongs to the class I-like SAM-binding methyltransferase superfamily. RNA methyltransferase RlmE family. RlmM subfamily. As to quaternary structure, monomer.

The protein localises to the cytoplasm. The enzyme catalyses cytidine(2498) in 23S rRNA + S-adenosyl-L-methionine = 2'-O-methylcytidine(2498) in 23S rRNA + S-adenosyl-L-homocysteine + H(+). Functionally, catalyzes the 2'-O-methylation at nucleotide C2498 in 23S rRNA. The polypeptide is Ribosomal RNA large subunit methyltransferase M (Pseudomonas putida (strain GB-1)).